We begin with the raw amino-acid sequence, 252 residues long: Ribosomal RNA small subunit methyltransferase J (252 aa).

S-adenosyl-L-methionine-binding positions include 101 to 102 (RD), 117 to 118 (ER), 153 to 154 (SS), and Asp-171.

This sequence belongs to the methyltransferase superfamily. RsmJ family.

Its subcellular location is the cytoplasm. The enzyme catalyses guanosine(1516) in 16S rRNA + S-adenosyl-L-methionine = N(2)-methylguanosine(1516) in 16S rRNA + S-adenosyl-L-homocysteine + H(+). Its function is as follows. Specifically methylates the guanosine in position 1516 of 16S rRNA. The protein is Ribosomal RNA small subunit methyltransferase J of Salmonella schwarzengrund (strain CVM19633).